A 628-amino-acid polypeptide reads, in one-letter code: Beta-galactosidase large subunit (628 aa).

The Proton donor role is filled by E468. E536 acts as the Nucleophile in catalysis.

The protein belongs to the glycosyl hydrolase 2 family. As to quaternary structure, heterodimer of a large (LacL) and a small subunit (LacM).

It catalyses the reaction Hydrolysis of terminal non-reducing beta-D-galactose residues in beta-D-galactosides.. Its function is as follows. Component of a beta-galactosidase. This Lactobacillus helveticus (Lactobacillus suntoryeus) protein is Beta-galactosidase large subunit.